The sequence spans 173 residues: MPDATLSNTSLGRLAWLWLTVLIVAVDQVSKYYFENALSLYQQIIVIPDYFSWTLAYNTGAAFSFLADGAGWQRWLFALIAVVVSAVLVVWLKRLGRDDTWLAIALALVLGGALGNLYDRVVLGHVIDFILVHWQNRWYFPAFNVADSAITVGAIMLALDMFKSKKTGETVND.

A run of 4 helical transmembrane segments spans residues 14–34 (LAWLWLTVLIVAVDQVSKYYF), 44–64 (IIVIPDYFSWTLAYNTGAAFS), 72–92 (WQRWLFALIAVVVSAVLVVWL), and 98–118 (DDTWLAIALALVLGGALGNLY). Catalysis depends on residues Asp-128 and Asp-147. The chain crosses the membrane as a helical span at residues 139–159 (YFPAFNVADSAITVGAIMLAL).

Belongs to the peptidase A8 family.

The protein localises to the cell inner membrane. It catalyses the reaction Release of signal peptides from bacterial membrane prolipoproteins. Hydrolyzes -Xaa-Yaa-Zaa-|-(S,diacylglyceryl)Cys-, in which Xaa is hydrophobic (preferably Leu), and Yaa (Ala or Ser) and Zaa (Gly or Ala) have small, neutral side chains.. The protein operates within protein modification; lipoprotein biosynthesis (signal peptide cleavage). This protein specifically catalyzes the removal of signal peptides from prolipoproteins. This Pseudomonas syringae pv. tomato (strain ATCC BAA-871 / DC3000) protein is Lipoprotein signal peptidase.